The following is a 169-amino-acid chain: Putative esterase F42H10.6 (169 aa).

The protein belongs to the thioesterase paaI family.

The sequence is that of Putative esterase F42H10.6 from Caenorhabditis elegans.